We begin with the raw amino-acid sequence, 3658 residues long: MKLRRRRASEVPTKISLFINSVTSVPLELIQEPLASFRWEFDKGDFHHWVDLFYHFDTFFEKHVKVRKDLRIEEEFDESDPPFPKDAVLQVLRVIRLVLENCTNKQFYTSYEQHLSLLLASTDADVVEACLQTLAAFLKRPTGKYSIRDASLNLKLFSLAQGWGGKEEGLGLTSCATEHSCDQLFLQLGCTLLFEFYASDESPSELPGGLQVIHVPDVSMRSESDLELLNKLVIDHNVPPSLRFALLTRLRFARAFSSLATRQQYTCIRLYAFIVLVQASGDTENVVSFFNGEPEFVNELVTLVSYEDTVPAKIRILCLQSLVALSQDRTRQPTVLTAVTSGGHRGLLSGLMQKAIDSVICNTSKWSLAFAEALLSLVTVLVSSSSGCSAMREAGLIPTLVPLIKDTDPQHLHLVSTAVHILEVFMDYSNPAAALFRDLGGLDDTIFRLKQEVSRTEDDVKEIVCCSGSNGPEDDTEQLPYSEALISYHRRLLLKALLRAISLGTYAPGNTNLYGSEESLLPECLCIIFRRAKDFGGGVFSLAATVMSDLIHKDPTCFNALDSAGLTSAFLDAISDEVICSAEAITCIPQCLDALCLNNSGLQAVKDRNALRCFVKIFSSPSYLKALTSDTPGSLSSGLDELLRHQSSLRTYGVDMFIEILNSILIIGSGMEATTSKSADVPTDAAPVPMEIDVDEKSLAVSDEAEPSSDTSPANIELFLPDCVCNVARLFETVLQNAEVCSLFVEKKGIDTVLQLFSLPLMPLSTSLGQSFSVAFKNFSPQHSAGLARILCSYLREHLKKTNNLLVSIEGTQLLKLESAVQTKILRSLSCLEGMLSLSNFLLKGSASVISELSAANADVLKELGITYKQTIWQMALCNDTKEDEKKSVDRASDNSVSASSSTAERESDEDSSNALAVRYTNPVSIRSSSSQSIWGGHREFLSVVRSGRGVHGHTRHAIARMRGGRTRRHLESFNFDSEIPADLPVTSSSHELKKKSTEVLIAEILNKLNCTLRFFFTSLVKGFTSANRRRIDGPSLSSASKTLGTALAKVFLEALNFQGYGAAAGPDTSLSLKCRYLGKVVDDITFLTFDTRRRVCFTAMVNSFYVHGTFKELLTTFEATSQLLWKVPFSIRASSTENEKSGERNLWSHSKWLVDTLQNYCRALDYFVNSTYLLSPTSQTQLLVQPASVDLSIGLFPVPREPETFVRNLQSQVLEVILPIWNHPMFPDCNPNFVASVTSLVTHIYSGVVDTRENRSGATQGTNQRALPLQPDEAIVGMIVEMGFSRSRAEDALRRVGTNSVEMAMDWLFTNPEDPVQEDDELAQALALSLGNSSETPKLEDTEKPVDVPQEEAEPKEPPVDEVIAASVKLFQSDDSIAFPLVDLFVTLCNRNKGEDRPKIVFYLIQQLKLVQLDFSKDTGALTMIPHILALVLSEDDNTREIAAQDGIVAVAIGILTDFNLKSESETDILAPKCISALLLVLSMMLQAQTRLSSEYVEGNQGGSLVLSDSPQDSTAALKDALSSDVAKGESNQALESMFGKSTGYLTMEESSKVLLIACGLIKQRVPAMIMQAVLQLCARLTKSHALAIQFLENGGLSSLFNLPKKCFFPGYDTVASVIVRHLVEDPQTLQIAMETEIRQTLSGKRHIGRVLPRTFLTTMAPVISRDPVVFMKAVASTCQLESSGGTDFVILTKEKEKPKVSGSEHGFSLNEPLGISENKLHDGSGKCSKSHRRVPTNFIQVIDQLIDIVLSFPGLKRQEGEAANLISMDVDEPTTKVKGKSKVGEPEKAELGSEKSEELARVTFILKLLSDIVLMYLHGTSVILRRDTEISQLRGSNLPDDSPGNGGLIYHVIHRLLPISLEKFVGPEEWKEKLSEKASWFLVVLCSRSNEGRKRIINELTRVLSVFASLGRSSSQSVLLPDKRVLAFANLVYSILTKNSSSSNFPGCGCSPDVAKSMIDGGTIQCLTSILNVIDLDHPDAPKLVTLILKSLETLTRAANAAEQLKSEVPNEQKNTDSDERHDSHGTSTSTEVDELNQNNSSLQQVTDAVDNGQEQPQVSSQSEGERGSSLTQAMLQEMRIEGDETILPEPIQMDFFREEIEGDQIEMSFHVEDRADDDVDDDMDDEGEDDEGDDEDADSVEDGAGVMSIAGTDVEDPEDTGLGDEYNDDMVDEDEEDEDEYNDDMVDEDEDDEDEYNDDMVDEDEDDFHETRVIEVRWREALDGLDHFQIVGRSGGGNGFIDDITAEPFEGVNVDDLFALRRSLGFERRRQTGRSSFDRSGSEVHGFQHPLFSRPSQTGNTASVSASAGSISRHSEAGSYDVAQFYMFDSPVLPFDQVPVDPFSDRLGGGGAPPPLTDYSVVGMDSSRRGVGDSRWTDVGHPQPSSLSASIAQLIEEHFITNLRASAPVDTVVERETNTTEVQEQQQPDVPPSVGSETVLGDGNEGGEQSEEHELLNNNEVMHPLPLNSTPNEIDRMEVGEGGGAPIEQVDREAVHLISSAQGQSDTSGIQNVSVTAIPPPVDDPDSNFQPSVDVDMSSDGAEGNQSVQPSPLDGDNNELSSMEATQDVRNDEQVDEGSLDGRAPEVNAIDPTFLEALPEDLRAEVLASQQAQSVQPPTYEPPSVDDIDPEFLAALPPEIQREVLAQQRAQRMLQQSQGQPVDMDNASIIATLPADLREEVLLTSSEAVLAALPPPLLAEAQMLRDRAMRHYQARSRVFGSSHRLNNRRNGLGYRLTGMERGVGVTIGQRDVSSSADGLKVKEIEGDPLVNADALKSLIRLLRLAQPLGKGLLQRLLLNLCAHSFTRANLVQLLLDMIRPEMETLPSELALTNPQRLYGCQLNVVYGRSQLLNGLPPLVFRRVLEVLTYLATNHSAVADMLFYFDSSLLSQLSSRKGKEKVTHETDSRDLEIPLVVFLKLLNRPQLLQSTSHLALVMGLLQVVVYTAASRIEGWSPSSGVPEKLENKPVGEEASSETQKDAESELSVARRKNCAELYNIFLQLPQSDLCNLCMLLGYEGLSDKIYSLAGEVLKKLAAVDVTHRKFFTKELSELASGLSSSTVRVLATLSTTQKMSQNTCSMAGASILRVLQVLSSLTSTIDDSNVGTDKETDQEEQNIMQGLKVALEPLWQELGQCISMTELQLDHTAATSNVNPGDHVLGISPTSSLSPGTQSLLPLIEAFFVLCEKIQTPSMLQQDATVTAGEVKESSTHGSSSKTIVDSQKKIDGSVTFSKFVEKHRRLLNSFVRQNPSLLEKSFSMMLKAPRLIDFDNKKAYFRSRIRHQHDQHISGPLRISVRRAYVLEDSYNQLRMRSPQDLKGRLNVQFQGEEGIDAGGLTREWYQLLSRVIFDKGALLFTTVGNDATFQPNPNSVYQTEHLSYFKFVGRMVAKALFDGQLLDVYFTRSFYKHILGVKVTYHDIEAVDPDYYKNLKWLLENDVSDILDLTFSMDADEEKHILYEKTEVTDYELKPGGRNIRVTEETKHEYVDLVADHILTSAIRPQINAFLEGLNELIPRELVSIFNDKELELLISGLPEIDFDDLKANTEYTSYTVGSPVIRWFWEVVKAFSKEDMARFLQFVTGTSKVPLEGFKALQGISGPQRLQIHKAYGSPERLPSAHTCFNQLDLPEYQSKEQVQERLLLAIHEANEGFGFA.

Over residues 884 to 893 (DEKKSVDRAS) the composition is skewed to basic and acidic residues. The interval 884 to 914 (DEKKSVDRASDNSVSASSSTAERESDEDSSN) is disordered. The span at 894–903 (DNSVSASSST) shows a compositional bias: low complexity. The UBA domain maps to 1271 to 1312 (QPDEAIVGMIVEMGFSRSRAEDALRRVGTNSVEMAMDWLFTN). The UIM domain occupies 1318 to 1337 (QEDDELAQALALSLGNSSET). 9 disordered regions span residues 1331–1360 (LGNS…KEPP), 1702–1733 (VSGS…SKSH), 2004–2038 (AEQL…VDEL), 2052–2072 (VDNG…RGSS), 2113–2204 (HVED…DDMV), 2293–2313 (PLFS…SAGS), 2417–2487 (ERET…EGGG), 2503–2591 (SAQG…PEVN), and 2958–2987 (SPSS…AESE). Positions 1338 to 1347 (PKLEDTEKPV) are enriched in basic and acidic residues. Basic and acidic residues predominate over residues 2007–2027 (LKSEVPNEQKNTDSDERHDSH). Polar residues predominate over residues 2028 to 2038 (GTSTSTEVDEL). Composition is skewed to acidic residues over residues 2117–2144 (RADD…DSVE) and 2156–2204 (DVED…DDMV). Residues 2297 to 2313 (RPSQTGNTASVSASAGS) show a composition bias toward polar residues. Over residues 2422–2431 (TTEVQEQQQP) the composition is skewed to low complexity. The segment covering 2503–2518 (SAQGQSDTSGIQNVSV) has biased composition (polar residues). S2582 bears the Phosphoserine mark. The 342-residue stretch at 3317 to 3658 (SPQDLKGRLN…HEANEGFGFA (342 aa)) folds into the HECT domain. Catalysis depends on C3625, which acts as the Glycyl thioester intermediate.

This sequence belongs to the UPL family. TOM1/PTR1 subfamily. Widely expressed. Expressed in root, stem, cauline and rosette leaf, seedling and flower (at protein level).

The catalysed reaction is S-ubiquitinyl-[E2 ubiquitin-conjugating enzyme]-L-cysteine + [acceptor protein]-L-lysine = [E2 ubiquitin-conjugating enzyme]-L-cysteine + N(6)-ubiquitinyl-[acceptor protein]-L-lysine.. It participates in protein modification; protein ubiquitination. Its function is as follows. Probable E3 ubiquitin-protein ligase which mediates ubiquitination and subsequent proteasomal degradation of target proteins. The polypeptide is E3 ubiquitin-protein ligase UPL2 (UPL2) (Arabidopsis thaliana (Mouse-ear cress)).